A 151-amino-acid chain; its full sequence is Large ribosomal subunit protein bL9 (151 aa).

It belongs to the bacterial ribosomal protein bL9 family.

Its function is as follows. Binds to the 23S rRNA. This Lacticaseibacillus casei (strain BL23) (Lactobacillus casei) protein is Large ribosomal subunit protein bL9.